Consider the following 207-residue polypeptide: B2 protein (207 aa).

Positions 1–68 are disordered; that stretch reads MIDQEESNFN…FKTLPPAESL (68 aa). 2 stretches are compositionally biased toward low complexity: residues 8-26 and 35-52; these read NFNF…QFHG and KNNN…GENK. The DCD domain maps to 72-204; that stretch reads ETVGGYIFVC…AISLLDIFEE (133 aa).

This chain is B2 protein, found in Daucus carota (Wild carrot).